The sequence spans 222 residues: Glutathione S-transferase A1 (222 aa).

Residue Met1 is modified to N-acetylmethionine. Residue Ala2 is modified to N-acetylalanine; in Glutathione S-transferase A1, N-terminally processed. The region spanning Glu3–Gly83 is the GST N-terminal domain. Lys4 is modified (N6-succinyllysine). Residues Tyr9, Arg45, Gln54–Val55, and Gln67–Thr68 contribute to the glutathione site. One can recognise a GST C-terminal domain in the interval Asp85–Pro207.

The protein belongs to the GST superfamily. Alpha family. In terms of assembly, homodimer or heterodimer of GSTA1 and GSTA2. In terms of tissue distribution, liver.

Its subcellular location is the cytoplasm. The catalysed reaction is RX + glutathione = an S-substituted glutathione + a halide anion + H(+). It catalyses the reaction prostaglandin A2 + glutathione = prostaglandin A2-S-(R)-glutathione. The enzyme catalyses prostaglandin J2 + glutathione = prostaglandin J2-S-(R)-glutathione. It carries out the reaction (13S)-hydroperoxy-(9Z,11E)-octadecadienoate + 2 glutathione = (13S)-hydroxy-(9Z,11E)-octadecadienoate + glutathione disulfide + H2O. The catalysed reaction is androst-5-ene-3,17-dione = androst-4-ene-3,17-dione. With respect to regulation, the isomerase activity is inhibited by S-methylglutathione (GSMe). In terms of biological role, glutathione S-transferase that catalyzes the nucleophilic attack of the sulfur atom of glutathione on the electrophilic groups of a wide range of exogenous and endogenous compounds. Involved in the formation of glutathione conjugates of both prostaglandin A2 (PGA2) and prostaglandin J2 (PGJ2). It also catalyzes the isomerization of D5-androstene-3,17-dione (AD) into D4-androstene-3,17-dione and may therefore play an important role in hormone biosynthesis. Through its glutathione-dependent peroxidase activity toward the fatty acid hydroperoxide (13S)-hydroperoxy-(9Z,11E)-octadecadienoate/13-HPODE it is also involved in the metabolism of oxidized linoleic acid. This is Glutathione S-transferase A1 (GSTA1) from Homo sapiens (Human).